Consider the following 2275-residue polypeptide: Serine-rich adhesin for platelets (2275 aa).

A signal peptide spans Met1–Phe89. The tract at residues Ala90–Ala230 is serine-rich repeat region 1, SRR1. Residues Leu100–Asn111 are compositionally biased toward polar residues. 2 disordered regions span residues Leu100–Thr229 and Asn751–Gly2247. Residues Ser112–Thr128 show a composition bias toward low complexity. A compositionally biased stretch (polar residues) spans Lys129–Asp140. The span at Val150 to Thr229 shows a compositional bias: low complexity. The tract at residues Pro231–Asn751 is non-repeat region (NRR). Low complexity-rich tracts occupy residues Ser752–Ser1392 and Ser1402–Glu2218. The interval Ser752–Thr2236 is serine-rich repeat region 2, SRR2. The LPXTG sorting signal signature appears at Leu2233–Gly2237. Position 2236 is a pentaglycyl murein peptidoglycan amidated threonine (Thr2236). Positions Gly2237–Ala2275 are cleaved as a propeptide — removed by sortase.

It belongs to the serine-rich repeat protein (SRRP) family. Proteolytically cleaved by a metalloprotease. In terms of processing, glycosylated. It is probable that most of the Ser residues in SSR1 and SSR2 are O-GlcNAcylated. Sequential glycosylation by sugar transferases are able to generate complex sugar polymorphisms.

The protein localises to the secreted. Its subcellular location is the cell wall. Functionally, mediates binding to human platelets, possibly through a receptor-ligand interaction. Probably associated with virulence in endovascular infection. The protein is Serine-rich adhesin for platelets (sraP) of Staphylococcus aureus (strain MSSA476).